Consider the following 171-residue polypeptide: Ribosome maturation factor RimP (171 aa).

This sequence belongs to the RimP family.

It localises to the cytoplasm. Required for maturation of 30S ribosomal subunits. This Anaeromyxobacter sp. (strain Fw109-5) protein is Ribosome maturation factor RimP.